Consider the following 418-residue polypeptide: MTSTLPNASTPDPSSLQPAVRPGAHGRFGRFGGQYVPETLMPALAELEQAAAQAWNDPAFTDELNRLLKNYVGRATPLYEAERLTAHYRRADGGPRIWLKREDLNHTGAHKINNALGQALLALRMGKKRIIAETGAGQHGVATATVCARFGLECVIYMGAEDMRRQALNVFRMRLLGATVQPVTAGTATLKDATSEAIRDWVTNVETTHYILGSVAGPHPYPMLVRDFHAVIGEESKQQCQEAFGRLPDVLMACVGGGSNAMGLFHPFVQDMSVRLIGVEAAGDGVASGRHAATITEGRAGVLHGAMSLLLQDGDGQVMEAHSISAGLDYPGVGPEHSYLREIGRAEYAAVTDQQALDALRLVSELEGIIPALETAHAFAWLEQLCPTLADGTEVVINCSGRGDKDVNTVAEKLGDQL.

Positions 1–17 (MTSTLPNASTPDPSSLQ) are enriched in polar residues. Residues 1-23 (MTSTLPNASTPDPSSLQPAVRPG) are disordered. Lys-111 is modified (N6-(pyridoxal phosphate)lysine).

This sequence belongs to the TrpB family. In terms of assembly, tetramer of two alpha and two beta chains. Requires pyridoxal 5'-phosphate as cofactor.

The enzyme catalyses (1S,2R)-1-C-(indol-3-yl)glycerol 3-phosphate + L-serine = D-glyceraldehyde 3-phosphate + L-tryptophan + H2O. It participates in amino-acid biosynthesis; L-tryptophan biosynthesis; L-tryptophan from chorismate: step 5/5. Its function is as follows. The beta subunit is responsible for the synthesis of L-tryptophan from indole and L-serine. In Synechococcus sp. (strain CC9605), this protein is Tryptophan synthase beta chain.